Reading from the N-terminus, the 134-residue chain is Parvalbumin-like EF-hand-containing protein (134 aa).

EF-hand domains follow at residues 55–90 (QLDD…IPSS) and 96–131 (LTDE…EKIP). Ca(2+) is bound by residues D68, D70, S72, F74, E76, E79, D109, D113, and E120.

The protein belongs to the parvalbumin family.

This is Parvalbumin-like EF-hand-containing protein from Homo sapiens (Human).